The sequence spans 159 residues: Ecotin (159 aa).

The first 22 residues, 1–22 (MRPTPLSTILALTMAATAPAMA), serve as a signal peptide directing secretion. A disulfide bond links Cys68 and Cys105.

The protein belongs to the protease inhibitor I11 (ecotin) family. In terms of assembly, homodimer.

It is found in the periplasm. Its function is as follows. General inhibitor of family S1 serine proteases. This Pseudomonas putida (strain W619) protein is Ecotin.